Reading from the N-terminus, the 247-residue chain is STING ER exit protein (247 aa).

Ser127 is modified (phosphoserine). Positions 195–216 (EAREIADSYANNARIIEKQLQR) form a coiled coil. The segment at 215–247 (QRKGGKLSDVGIKTKTEDAPPPQKKQRGTLLER) is disordered.

The protein belongs to the STEEP1 family.

Functionally, molecular adapter that stimulates membrane curvature formation and subsequent endoplasmic reticulum exit site (ERES) establishment by recruiting PI3K complex I, leading to COPII vesicle-mediated transport. The chain is STING ER exit protein from Drosophila melanogaster (Fruit fly).